The primary structure comprises 264 residues: Protein OXIDATIVE STRESS 3 LIKE 1 (264 aa).

Disordered stretches follow at residues 1–76 (MDCV…GPLE) and 178–225 (TGEG…QGSF). Over residues 29 to 43 (PSDSSSSPSSSASSS) the composition is skewed to low complexity. The span at 47-56 (NSDDGEKSSE) shows a compositional bias: basic and acidic residues. A compositionally biased stretch (acidic residues) spans 57-67 (DGGDDAGENEV). Low complexity predominate over residues 179–201 (GEGSSSGGDSSPGSSPTTSGSPP). The segment covering 203 to 212 (QLHHHQHQMK) has biased composition (basic residues).

The protein resides in the nucleus. Functionally, promotes slightly the tolerance to zinc (Zn) and to oxidizing chemicals (e.g. diamide). In Arabidopsis thaliana (Mouse-ear cress), this protein is Protein OXIDATIVE STRESS 3 LIKE 1.